We begin with the raw amino-acid sequence, 312 residues long: MIASIYSFLDYLKMVKSASPHTLRNYCLDLNGLKIFLEERGNLAPSSPLQLATEKRKVSELPFSLFTKEHVRMYIAKLIENGKAKRTIKRCLSSIKSFAHYCVIQKILLENPAETIHGPRLPKELPSPMTYAQVEVLMATPDISKYHGLRDRCLMELFYSSGLRISEIVAVNKQDFDLSTHLIRIRGKGKKERIIPVTSNAIQWIQIYLNHPDRKRLEKDPQAIFLNRFGRRISTRSIDRSFQEYLRRSGLSGHITPHTIRHTIATHWLESGMDLKTIQALLGHSSLETTTVYTQVSVKLKKQTHQEAHPHA.

The Core-binding (CB) domain maps to 1–103; it reads MIASIYSFLD…SIKSFAHYCV (103 aa). A Tyr recombinase domain is found at 124-306; sequence ELPSPMTYAQ…SVKLKKQTHQ (183 aa). Catalysis depends on residues R164, K188, H258, R261, and H284. The active-site O-(3'-phospho-DNA)-tyrosine intermediate is the Y293.

Belongs to the 'phage' integrase family. XerC subfamily. Forms a cyclic heterotetrameric complex composed of two molecules of XerC and two molecules of XerD.

Its subcellular location is the cytoplasm. Functionally, site-specific tyrosine recombinase, which acts by catalyzing the cutting and rejoining of the recombining DNA molecules. The XerC-XerD complex is essential to convert dimers of the bacterial chromosome into monomers to permit their segregation at cell division. It also contributes to the segregational stability of plasmids. The protein is Tyrosine recombinase XerC of Chlamydia pneumoniae (Chlamydophila pneumoniae).